The following is a 314-amino-acid chain: Ribosomal protein L11 methyltransferase (314 aa).

Residues threonine 161, glycine 182, aspartate 204, and asparagine 248 each contribute to the S-adenosyl-L-methionine site.

This sequence belongs to the methyltransferase superfamily. PrmA family.

The protein localises to the cytoplasm. The catalysed reaction is L-lysyl-[protein] + 3 S-adenosyl-L-methionine = N(6),N(6),N(6)-trimethyl-L-lysyl-[protein] + 3 S-adenosyl-L-homocysteine + 3 H(+). In terms of biological role, methylates ribosomal protein L11. The polypeptide is Ribosomal protein L11 methyltransferase (Listeria monocytogenes serotype 4b (strain CLIP80459)).